We begin with the raw amino-acid sequence, 115 residues long: Promotilin (115 aa).

The N-terminal stretch at 1 to 25 is a signal peptide; that stretch reads MVSRKAVAALLVVHAPAMLASQTEA. Residues 40–74 form a disordered region; that stretch reads EKERSKGQKKSLSVWQRSGEEGPVDPAEPIEEEGN.

Belongs to the motilin family.

Its subcellular location is the secreted. Functionally, plays an important role in the regulation of interdigestive gastrointestinal motility and indirectly causes rhythmic contraction of duodenal and colonic smooth muscle. This Macaca mulatta (Rhesus macaque) protein is Promotilin (MLN).